We begin with the raw amino-acid sequence, 357 residues long: SUN domain-containing protein 3 (357 aa).

Topologically, residues 1-47 are nuclear; the sequence is MSGKTKARRAAMFFRRCSEDASGSASGNALLSEDENPDANGVTRSWK. A helical transmembrane segment spans residues 48–64; it reads IILSTMLTLTFLLVGLL. The Perinuclear space portion of the chain corresponds to 65 to 357; sequence NHQWLKETDV…RVHGTPGKHI (293 aa). Positions 98–146 form a coiled coil; that stretch reads RLRMPKEQLELLKKESQNLENNFRQILFLIEQIDVLKALLRDMKDGMDN. Residues 193 to 354 enclose the SUN domain; that stretch reads GASIIEAGTS…YRFRVHGTPG (162 aa).

As to quaternary structure, self-associates. Interacts with SYNE1 and SPAG4/SUN4. Proposed to form a spermatogenesis-specific LINC complex with SYNE1 during sperm head formation possibly implicating a SUN domain-based heterotrimer with SPAG4/SUN4 associating with SYNE1.

Its subcellular location is the membrane. It is found in the nucleus envelope. The protein localises to the nucleus inner membrane. In terms of biological role, as a probable component of the LINC (LInker of Nucleoskeleton and Cytoskeleton) complex, involved in the connection between the nuclear lamina and the cytoskeleton. The nucleocytoplasmic interactions established by the LINC complex play an important role in the transmission of mechanical forces across the nuclear envelope and in nuclear movement and positioning. May be involved in nuclear remodeling during sperm head formation in spermatogenesis. A probable SUN3:SYNE1 LINC complex may tether spermatid nuclei to posterior cytoskeletal structures such as the manchette. This Homo sapiens (Human) protein is SUN domain-containing protein 3 (SUN3).